The primary structure comprises 81 residues: Large ribosomal subunit protein bL27 (81 aa).

The span at 1–11 (MATSKSGGSSK) shows a compositional bias: polar residues. The tract at residues 1-20 (MATSKSGGSSKNGRDSISKR) is disordered.

The protein belongs to the bacterial ribosomal protein bL27 family.

The sequence is that of Large ribosomal subunit protein bL27 from Borreliella afzelii (strain PKo) (Borrelia afzelii).